Reading from the N-terminus, the 1218-residue chain is DNA polymerase subunit gamma-1 (1218 aa).

A disordered region spans residues 31-50 (LDPVPSDGRPPSQMPSSENG). An Exo I motif is present at residues 179–183 (VFDVE). The active-site Exonuclease activity is D181. The short motif at 250 to 258 (VGHNVSFDR) is the Exo II element. A DNA-binding site is contributed by S289. The Exo III signature appears at 378-386 (YCARDVWAT). The interval 484–524 (KKVKKPASASKLPIEGAGPFGDPMDQEDPGPPSEEEELQRS) is disordered. Residues 492–553 (ASKLPIEGAG…RPQHLPGHPG (62 aa)) are accessory-interacting determinant. Over residues 507 to 520 (MDQEDPGPPSEEEE) the composition is skewed to acidic residues. Position 561 (R561) interacts with RNA. S575 provides a ligand contact to DNA. Positions 733, 742, and 747 each coordinate RNA. Residues K785 and T828 each coordinate DNA. Residues 837-843 (TWLTASN) are trigger loop. S842 and R848 together coordinate RNA. The short motif at 866–875 (VGADVDSQEL) is the Pol A element. Positions 869, 870, 872, 874, 922, 926, and 930 each coordinate a 2'-deoxyribonucleoside 5'-triphosphate. Positions 869 and 870 each coordinate Mg(2+). The Pol B motif lies at 922-937 (REHAKIFNYGRIYGAG). Residues T1073 and S1074 each coordinate DNA. Residues 1113 to 1120 (HDEVRYLV) carry the Pol C motif. Position 1114 (D1114) interacts with a 2'-deoxyribonucleoside 5'-triphosphate. D1114 is a Mg(2+) binding site.

This sequence belongs to the DNA polymerase type-A family. Heterotrimer composed of a catalytic subunit and a homodimer of accessory subunits (POLG:POLG2). Interacts with TTC3. Interacts with LIG3. It depends on Mg(2+) as a cofactor.

It localises to the mitochondrion. The protein localises to the mitochondrion matrix. The protein resides in the mitochondrion nucleoid. It catalyses the reaction DNA(n) + a 2'-deoxyribonucleoside 5'-triphosphate = DNA(n+1) + diphosphate. It carries out the reaction a 3'-end 2'-deoxyribonucleotidyl-deoxyribonucleotide-DNA + H2O = a 3'-end 2'-deoxyribonucleotide-DNA + a 2'-deoxyribonucleoside 5'-phosphate + H(+). The enzyme catalyses a 5'-end 2'-deoxyribose-2'-deoxyribonucleotide-DNA = (2E,4S)-4-hydroxypenten-2-al-5-phosphate + a 5'-end 5'-phospho-2'-deoxyribonucleoside-DNA + H(+). With respect to regulation, inhibited by dideoxynucleotides such as antiviral agent zalcitabine. Its function is as follows. Catalytic subunit of DNA polymerase gamma solely responsible for replication of mitochondrial DNA (mtDNA). Replicates both heavy and light strands of the circular mtDNA genome using a single-stranded DNA template, RNA primers and the four deoxyribonucleoside triphosphates as substrates. Has 5' -&gt; 3' polymerase activity. Functionally interacts with TWNK and SSBP1 at the replication fork to form a highly processive replisome, where TWNK unwinds the double-stranded DNA template prior to replication and SSBP1 covers the parental heavy strand to enable continuous replication of the entire mitochondrial genome. A single nucleotide incorporation cycle includes binding of the incoming nucleotide at the insertion site, a phosphodiester bond formation reaction that extends the 3'-end of the primer DNA, and translocation of the primer terminus to the post-insertion site. After completing replication of a mtDNA strand, mediates 3' -&gt; 5' exonucleolytic degradation at the nick to enable proper ligation. Highly accurate due to high nucleotide selectivity and 3' -&gt; 5' exonucleolytic proofreading. Proficiently corrects base substitutions, single-base additions and deletions in non-repetitive sequences and short repeats, but displays lower proofreading activity when replicating longer homopolymeric stretches. Exerts exonuclease activity toward single-stranded DNA and double-stranded DNA containing 3'-terminal mispairs. When a misincorporation occurs, transitions from replication to a pro-nucleolytic editing mode and removes the missincorporated nucleoside in the exonuclease active site. Proceeds via an SN2 nucleolytic mechanism in which Asp-198 catalyzes phosphodiester bond hydrolysis and Glu-200 stabilizes the leaving group. As a result the primer strand becomes one nucleotide shorter and is positioned in the post-insertion site, ready to resume DNA synthesis. Exerts 5'-deoxyribose phosphate (dRP) lyase activity and mediates repair-associated mtDNA synthesis (gap filling) in base-excision repair pathway. Catalyzes the release of the 5'-terminal 2-deoxyribose-5-phosphate sugar moiety from incised apurinic/apyrimidinic (AP) sites to produce a substrate for DNA ligase. The dRP lyase reaction does not require divalent metal ions and likely proceeds via a Schiff base intermediate in a beta-elimination reaction mechanism. In Mus musculus (Mouse), this protein is DNA polymerase subunit gamma-1.